The following is a 795-amino-acid chain: Phenylalanine--tRNA ligase beta subunit (795 aa).

Residues 39–148 enclose the tRNA-binding domain; that stretch reads AGEFNGVVVG…ADAPVGKDFR (110 aa). Residues 401-476 form the B5 domain; the sequence is PKLNKVQLRR…RIYGYNSIPN (76 aa). 4 residues coordinate Mg(2+): Asp-454, Asp-460, Glu-463, and Glu-464. One can recognise an FDX-ACB domain in the interval 701-794; it reads SKFPANKRDL…LKDRFNAYLR (94 aa).

Belongs to the phenylalanyl-tRNA synthetase beta subunit family. Type 1 subfamily. As to quaternary structure, tetramer of two alpha and two beta subunits. Mg(2+) is required as a cofactor.

Its subcellular location is the cytoplasm. The enzyme catalyses tRNA(Phe) + L-phenylalanine + ATP = L-phenylalanyl-tRNA(Phe) + AMP + diphosphate + H(+). The sequence is that of Phenylalanine--tRNA ligase beta subunit from Mannheimia succiniciproducens (strain KCTC 0769BP / MBEL55E).